A 300-amino-acid chain; its full sequence is 4-hydroxy-tetrahydrodipicolinate synthase (300 aa).

T55 contributes to the pyruvate binding site. The active-site Proton donor/acceptor is the Y143. The active-site Schiff-base intermediate with substrate is the K171. Pyruvate is bound at residue I211.

The protein belongs to the DapA family. In terms of assembly, homotetramer; dimer of dimers.

The protein resides in the cytoplasm. The enzyme catalyses L-aspartate 4-semialdehyde + pyruvate = (2S,4S)-4-hydroxy-2,3,4,5-tetrahydrodipicolinate + H2O + H(+). It functions in the pathway amino-acid biosynthesis; L-lysine biosynthesis via DAP pathway; (S)-tetrahydrodipicolinate from L-aspartate: step 3/4. Functionally, catalyzes the condensation of (S)-aspartate-beta-semialdehyde [(S)-ASA] and pyruvate to 4-hydroxy-tetrahydrodipicolinate (HTPA). The sequence is that of 4-hydroxy-tetrahydrodipicolinate synthase from Mycobacterium bovis (strain ATCC BAA-935 / AF2122/97).